Here is a 345-residue protein sequence, read N- to C-terminus: L-threonine 3-dehydrogenase (345 aa).

Cys-39 contributes to the Zn(2+) binding site. Catalysis depends on charge relay system residues Thr-41 and His-44. The Zn(2+) site is built by His-64, Glu-65, Cys-94, Cys-97, Cys-100, and Cys-108. Residues Ile-176, Asp-196, Arg-201, 263-265 (LGI), and 287-288 (VY) each bind NAD(+).

Belongs to the zinc-containing alcohol dehydrogenase family. Homotetramer. It depends on Zn(2+) as a cofactor.

It localises to the cytoplasm. It catalyses the reaction L-threonine + NAD(+) = (2S)-2-amino-3-oxobutanoate + NADH + H(+). It functions in the pathway amino-acid degradation; L-threonine degradation via oxydo-reductase pathway; glycine from L-threonine: step 1/2. Its function is as follows. Catalyzes the NAD(+)-dependent oxidation of L-threonine to 2-amino-3-ketobutyrate. The polypeptide is L-threonine 3-dehydrogenase (Anaeromyxobacter sp. (strain K)).